Here is a 331-residue protein sequence, read N- to C-terminus: Adenosine deaminase (331 aa).

Zn(2+) contacts are provided by H12 and H14. Positions 14, 16, and 170 each coordinate substrate. H197 is a binding site for Zn(2+). E200 serves as the catalytic Proton donor. Position 278 (D278) interacts with Zn(2+). D279 serves as a coordination point for substrate.

It belongs to the metallo-dependent hydrolases superfamily. Adenosine and AMP deaminases family. Adenosine deaminase subfamily. Zn(2+) serves as cofactor.

The enzyme catalyses adenosine + H2O + H(+) = inosine + NH4(+). It catalyses the reaction 2'-deoxyadenosine + H2O + H(+) = 2'-deoxyinosine + NH4(+). Functionally, catalyzes the hydrolytic deamination of adenosine and 2-deoxyadenosine. This is Adenosine deaminase from Shewanella baltica (strain OS155 / ATCC BAA-1091).